A 415-amino-acid polypeptide reads, in one-letter code: Serine hydroxymethyltransferase (415 aa).

Residues leucine 117 and 121-123 (GHL) each bind (6S)-5,6,7,8-tetrahydrofolate. N6-(pyridoxal phosphate)lysine is present on lysine 226. (6S)-5,6,7,8-tetrahydrofolate contacts are provided by residues glutamate 241 and 349-351 (SPF).

Belongs to the SHMT family. Homodimer. Requires pyridoxal 5'-phosphate as cofactor.

Its subcellular location is the cytoplasm. It carries out the reaction (6R)-5,10-methylene-5,6,7,8-tetrahydrofolate + glycine + H2O = (6S)-5,6,7,8-tetrahydrofolate + L-serine. It functions in the pathway one-carbon metabolism; tetrahydrofolate interconversion. Its pathway is amino-acid biosynthesis; glycine biosynthesis; glycine from L-serine: step 1/1. In terms of biological role, catalyzes the reversible interconversion of serine and glycine with tetrahydrofolate (THF) serving as the one-carbon carrier. This reaction serves as the major source of one-carbon groups required for the biosynthesis of purines, thymidylate, methionine, and other important biomolecules. Also exhibits THF-independent aldolase activity toward beta-hydroxyamino acids, producing glycine and aldehydes, via a retro-aldol mechanism. The protein is Serine hydroxymethyltransferase of Geobacter sulfurreducens (strain ATCC 51573 / DSM 12127 / PCA).